Consider the following 267-residue polypeptide: 5'-nucleotidase SurE (267 aa).

Residues aspartate 9, aspartate 10, serine 40, and asparagine 97 each coordinate a divalent metal cation.

Belongs to the SurE nucleotidase family. It depends on a divalent metal cation as a cofactor.

It is found in the cytoplasm. It catalyses the reaction a ribonucleoside 5'-phosphate + H2O = a ribonucleoside + phosphate. In terms of biological role, nucleotidase that shows phosphatase activity on nucleoside 5'-monophosphates. This Helicobacter pylori (strain ATCC 700392 / 26695) (Campylobacter pylori) protein is 5'-nucleotidase SurE.